A 78-amino-acid polypeptide reads, in one-letter code: Acyl carrier protein (78 aa).

In terms of domain architecture, Carrier spans 2–77 (SNIEDRVRKI…AAIDYVNSAS (76 aa)). Position 37 is an O-(pantetheine 4'-phosphoryl)serine (S37).

Belongs to the acyl carrier protein (ACP) family. Post-translationally, 4'-phosphopantetheine is transferred from CoA to a specific serine of apo-ACP by AcpS. This modification is essential for activity because fatty acids are bound in thioester linkage to the sulfhydryl of the prosthetic group.

Its subcellular location is the cytoplasm. The protein operates within lipid metabolism; fatty acid biosynthesis. Functionally, carrier of the growing fatty acid chain in fatty acid biosynthesis. This is Acyl carrier protein from Photobacterium profundum (strain SS9).